A 134-amino-acid chain; its full sequence is Small ribosomal subunit protein uS8c (134 aa).

It belongs to the universal ribosomal protein uS8 family. Part of the 30S ribosomal subunit.

The protein localises to the plastid. Its subcellular location is the chloroplast. Functionally, one of the primary rRNA binding proteins, it binds directly to 16S rRNA central domain where it helps coordinate assembly of the platform of the 30S subunit. The chain is Small ribosomal subunit protein uS8c (rps8) from Panax ginseng (Korean ginseng).